Reading from the N-terminus, the 641-residue chain is DNA primase (641 aa).

A CHC2-type zinc finger spans residues 41-65 (CPFHDEKSPSFQVSPSKGFFHCFGC). One can recognise a Toprim domain in the interval 262-346 (SRAVVVEGYT…AAETYIAIAP (85 aa)). Glutamate 268, aspartate 317, and aspartate 319 together coordinate Mg(2+). The disordered stretch occupies residues 444–478 (RDRGGKGPAPDQRQRGGGPQQQAGPMTATPRGPAL).

This sequence belongs to the DnaG primase family. Monomer. Interacts with DnaB. Zn(2+) is required as a cofactor. It depends on Mg(2+) as a cofactor.

The catalysed reaction is ssDNA + n NTP = ssDNA/pppN(pN)n-1 hybrid + (n-1) diphosphate.. Its function is as follows. RNA polymerase that catalyzes the synthesis of short RNA molecules used as primers for DNA polymerase during DNA replication. The protein is DNA primase of Streptomyces coelicolor (strain ATCC BAA-471 / A3(2) / M145).